The chain runs to 130 residues: Small ribosomal subunit protein uS9 (130 aa).

The tract at residues 107–130 (DSRKVERKKPGLKKARKASQFSKR) is disordered. A compositionally biased stretch (basic residues) spans 111 to 130 (VERKKPGLKKARKASQFSKR).

This sequence belongs to the universal ribosomal protein uS9 family.

This chain is Small ribosomal subunit protein uS9, found in Streptococcus sanguinis (strain SK36).